Consider the following 645-residue polypeptide: 1,4-alpha-glucan branching enzyme GlgB (645 aa).

Asp309 functions as the Nucleophile in the catalytic mechanism. The active-site Proton donor is the Glu352. Residues 619–645 (VKTRKGSKKQDGSKTKVRSNVTSRGKR) form a disordered region. Residues 636–645 (RSNVTSRGKR) show a composition bias toward polar residues.

The protein belongs to the glycosyl hydrolase 13 family. GlgB subfamily. In terms of assembly, monomer.

The catalysed reaction is Transfers a segment of a (1-&gt;4)-alpha-D-glucan chain to a primary hydroxy group in a similar glucan chain.. The protein operates within glycan biosynthesis; glycogen biosynthesis. Functionally, catalyzes the formation of the alpha-1,6-glucosidic linkages in glycogen by scission of a 1,4-alpha-linked oligosaccharide from growing alpha-1,4-glucan chains and the subsequent attachment of the oligosaccharide to the alpha-1,6 position. The sequence is that of 1,4-alpha-glucan branching enzyme GlgB from Bacillus cereus (strain Q1).